The chain runs to 311 residues: MSTEKLTVALLSGGASAEREVSLKSGEQVFNALDKQRYLVLRYDPAHDLTRLAADAEKIDVALIILHGRMGEDGTIQGLLESLGIPYQGSGVLGSAVAMNKILSKQLYIHAGLPVAPHLVADRREPPDLDTVADRLGLPVVVKPEHEGSSIGLSIVRNRDQLAAAVETGWQYDRRCLIEKYVHGIEITGGVLGNDHLQALPLIEIIPGEAYEFFDYKAKYTPGASREICPARLSDTITAKAQEYARKAHQALCCKGYSRTDMIVSGNDIFILETNTIPGMTATSLFPQAAAVAGISFSALLDRLIELALED.

Positions 105 to 306 constitute an ATP-grasp domain; sequence KQLYIHAGLP…FSALLDRLIE (202 aa). 133–188 contacts ATP; it reads ADRLGLPVVVKPEHEGSSIGLSIVRNRDQLAAAVETGWQYDRRCLIEKYVHGIEIT. Mg(2+)-binding residues include Asp261, Glu273, and Asn275.

This sequence belongs to the D-alanine--D-alanine ligase family. It depends on Mg(2+) as a cofactor. The cofactor is Mn(2+).

It is found in the cytoplasm. It carries out the reaction 2 D-alanine + ATP = D-alanyl-D-alanine + ADP + phosphate + H(+). It functions in the pathway cell wall biogenesis; peptidoglycan biosynthesis. Functionally, cell wall formation. The polypeptide is D-alanine--D-alanine ligase (Syntrophobacter fumaroxidans (strain DSM 10017 / MPOB)).